The primary structure comprises 227 residues: MKMVAPWTRFYSHSCCLCCHVRTGTILLGIWYLIINAVVLLILLSALADPDQYHFSGSELGGEFEFMDDANMCIAIAISLLMILICAMATYGAYKQHAAWIIPFFCYQIFDFALNTLVAITVLVYPNSIQEYIRQLPPSFPYRDDIMSVNPTCLVLVILLFIGIILTFKGYLISCVWSCYRYINGRNSSDVLVYVTSNDTTVLLPPYDDATAVTGTAKEPPPPYVSA.

A run of 4 helical transmembrane segments spans residues 26-46, 72-92, 100-120, and 153-173; these read ILLG…LLSA, MCIA…ATYG, WIIP…LVAI, and CLVL…GYLI. The interval 205–222 is required for NEDD4 interaction; the sequence is PPYDDATAVTGTAKEPPP.

It belongs to the LAPTM4/LAPTM5 transporter family. In terms of assembly, homooligomer; upon reaching the lysosomes. Interacts with MCOLN1. Interacts with NEDD4; may play a role in the lysosomal sorting of LAPTM4B; enhances HGS association with NEDD4; mediates inhibition of EGFR degradation. Interacts with PIP5K1C; promotes SNX5 association with LAPTM4B; kinase activity of PIP5K1C is required; interaction is regulated by phosphatidylinositol 4,5-bisphosphate generated by PIP5K1C. Interacts with HGS; promotes HGS ubiquitination. Interacts with SNX5. Interacts with SLC3A2 and SLC7A5; recruits SLC3A2 and SLC7A5 to lysosomes to promote leucine uptake into these organelles and is required for mTORC1 activation. Interacts with LRRC32; decreases TGFB1 production in regulatory T cells. Interacts with BECN1; competes with EGFR for LAPTM4B binding; regulates EGFR activity. Interacts with EGFR; positively correlates with EGFR activation. Undergoes proteolytic cleavage following delivery to the lysosomes. In terms of processing, ubiquitinated by NEDD4.

It localises to the endomembrane system. Its subcellular location is the late endosome membrane. The protein resides in the cell membrane. It is found in the cell projection. The protein localises to the lysosome membrane. It localises to the endosome membrane. Its subcellular location is the endosome. The protein resides in the multivesicular body membrane. It is found in the multivesicular body lumen. Required for optimal lysosomal function. Blocks EGF-stimulated EGFR intraluminal sorting and degradation. Conversely by binding with the phosphatidylinositol 4,5-bisphosphate, regulates its PIP5K1C interaction, inhibits HGS ubiquitination and relieves LAPTM4B inhibition of EGFR degradation. Recruits SLC3A2 and SLC7A5 (the Leu transporter) to the lysosome, promoting entry of leucine and other essential amino acid (EAA) into the lysosome, stimulating activation of proton-transporting vacuolar (V)-ATPase protein pump (V-ATPase) and hence mTORC1 activation. Plays a role as negative regulator of TGFB1 production in regulatory T cells. Binds ceramide and facilitates its exit from late endosome in order to control cell death pathways. This Rattus norvegicus (Rat) protein is Lysosomal-associated transmembrane protein 4B.